The following is a 37-amino-acid chain: Dolichyl-diphosphooligosaccharide--protein glycosyltransferase subunit 4 (37 aa).

Over Met1–Asp4 the chain is Lumenal. The helical transmembrane segment at Val5–Tyr25 threads the bilayer. The Cytoplasmic portion of the chain corresponds to His26–Glu37.

It belongs to the OST4 family. As to quaternary structure, component of the oligosaccharyltransferase (OST) complex. OST exists in two different complex forms which contain common core subunits RPN1, RPN2, OST48, OST4, DAD1 and TMEM258, either STT3A or STT3B as catalytic subunits, and form-specific accessory subunits. STT3A complex assembly occurs through the formation of 3 subcomplexes. Subcomplex 1 contains RPN1 and TMEM258, subcomplex 2 contains the STT3A-specific subunits STT3A, DC2/OSTC, and KCP2 as well as the core subunit OST4, and subcomplex 3 contains RPN2, DAD1, and OST48. The STT3A complex can form stable complexes with the Sec61 complex or with both the Sec61 and TRAP complexes.

Its subcellular location is the endoplasmic reticulum. The protein resides in the endoplasmic reticulum membrane. It functions in the pathway protein modification; protein glycosylation. Functionally, subunit of the oligosaccharyl transferase (OST) complex that catalyzes the initial transfer of a defined glycan (Glc(3)Man(9)GlcNAc(2) in eukaryotes) from the lipid carrier dolichol-pyrophosphate to an asparagine residue within an Asn-X-Ser/Thr consensus motif in nascent polypeptide chains, the first step in protein N-glycosylation. N-glycosylation occurs cotranslationally and the complex associates with the Sec61 complex at the channel-forming translocon complex that mediates protein translocation across the endoplasmic reticulum (ER). All subunits are required for a maximal enzyme activity. Specifically involved in maintaining stability of STT3A-containing OST complexes. The sequence is that of Dolichyl-diphosphooligosaccharide--protein glycosyltransferase subunit 4 from Homo sapiens (Human).